Reading from the N-terminus, the 186-residue chain is UPF0301 protein HI_0304 (186 aa).

This sequence belongs to the UPF0301 (AlgH) family.

The sequence is that of UPF0301 protein HI_0304 from Haemophilus influenzae (strain ATCC 51907 / DSM 11121 / KW20 / Rd).